Here is a 172-residue protein sequence, read N- to C-terminus: Pollen-specific protein-like At4g18596 (172 aa).

The signal sequence occupies residues 1–27 (MASKAIFFFFVSAVCLSSLAGVAIADA). Disulfide bonds link Cys41/Cys112, Cys44/Cys157, and Cys65/Cys100. Asn70 carries an N-linked (GlcNAc...) asparagine glycan.

This sequence belongs to the Ole e I family.

Its subcellular location is the secreted. This is Pollen-specific protein-like At4g18596 from Arabidopsis thaliana (Mouse-ear cress).